The sequence spans 231 residues: Flagellar L-ring protein (231 aa).

The signal sequence occupies residues 1–18 (MSRLLIVVSLSSAFALAG). A lipid anchor (N-palmitoyl cysteine) is attached at Cys19. The S-diacylglycerol cysteine moiety is linked to residue Cys19.

It belongs to the FlgH family. In terms of assembly, the basal body constitutes a major portion of the flagellar organelle and consists of four rings (L,P,S, and M) mounted on a central rod.

The protein localises to the cell outer membrane. It is found in the bacterial flagellum basal body. Its function is as follows. Assembles around the rod to form the L-ring and probably protects the motor/basal body from shearing forces during rotation. This is Flagellar L-ring protein from Stutzerimonas stutzeri (strain A1501) (Pseudomonas stutzeri).